A 126-amino-acid polypeptide reads, in one-letter code: uncharacterized protein (126 aa).

This is an uncharacterized protein from Bacillus subtilis (strain 168).